The primary structure comprises 218 residues: MSASLDLRCYLVTGAPHEKVVDVAAAAAAGGAGVVQVRSKPISVRDLTALAVEVAAAVQKANPATRVLIDDRVDVAAALMPEHNIHGVHIGQDDLDPRLARQLLGKDAIIGLTTGTLPLVQQANEYADVIDYIGAGPFRPTPTKDSGREPLGLEGYPALVEASRVPVVAIGDVHAEDAADLAATGVAGLAIVRGIMQAENPKAYAESVVSQFSEANER.

4-amino-2-methyl-5-(diphosphooxymethyl)pyrimidine is bound by residues 36 to 40 (QVRSK) and Asp70. 2 residues coordinate Mg(2+): Asp71 and Asp94. Thr113 contributes to the 4-amino-2-methyl-5-(diphosphooxymethyl)pyrimidine binding site. 141-143 (TPT) serves as a coordination point for 2-[(2R,5Z)-2-carboxy-4-methylthiazol-5(2H)-ylidene]ethyl phosphate. Lys144 is a binding site for 4-amino-2-methyl-5-(diphosphooxymethyl)pyrimidine.

It belongs to the thiamine-phosphate synthase family. Requires Mg(2+) as cofactor.

It carries out the reaction 2-[(2R,5Z)-2-carboxy-4-methylthiazol-5(2H)-ylidene]ethyl phosphate + 4-amino-2-methyl-5-(diphosphooxymethyl)pyrimidine + 2 H(+) = thiamine phosphate + CO2 + diphosphate. The enzyme catalyses 2-(2-carboxy-4-methylthiazol-5-yl)ethyl phosphate + 4-amino-2-methyl-5-(diphosphooxymethyl)pyrimidine + 2 H(+) = thiamine phosphate + CO2 + diphosphate. It catalyses the reaction 4-methyl-5-(2-phosphooxyethyl)-thiazole + 4-amino-2-methyl-5-(diphosphooxymethyl)pyrimidine + H(+) = thiamine phosphate + diphosphate. It participates in cofactor biosynthesis; thiamine diphosphate biosynthesis; thiamine phosphate from 4-amino-2-methyl-5-diphosphomethylpyrimidine and 4-methyl-5-(2-phosphoethyl)-thiazole: step 1/1. Its function is as follows. Condenses 4-methyl-5-(beta-hydroxyethyl)thiazole monophosphate (THZ-P) and 2-methyl-4-amino-5-hydroxymethyl pyrimidine pyrophosphate (HMP-PP) to form thiamine monophosphate (TMP). This chain is Thiamine-phosphate synthase, found in Corynebacterium jeikeium (strain K411).